The sequence spans 207 residues: Serotonin N-acetyltransferase (207 aa).

Phosphothreonine; by PKA is present on T31. The N-acetyltransferase domain maps to S35 to S194. Residue L124 coordinates substrate. Acetyl-CoA-binding positions include L124–V126 and Q132–S137. M159 is a substrate binding site. Y168–K170 contacts acetyl-CoA. S205 carries the phosphoserine modification.

It belongs to the acetyltransferase family. AANAT subfamily. As to quaternary structure, monomer. Interacts with several 14-3-3 proteins, including YWHAB, YWHAE, YWHAG and YWHAZ, preferentially when phosphorylated at Thr-31. Phosphorylation on Ser-205 also allows binding to YWHAZ, but with lower affinity. The interaction with YWHAZ considerably increases affinity for arylalkylamines and acetyl-CoA and protects the enzyme from dephosphorylation and proteasomal degradation. It may also prevent thiol-dependent inactivation. CAMP-dependent phosphorylation on both N-terminal Thr-31 and C-terminal Ser-205 regulates AANAT activity by promoting interaction with 14-3-3 proteins. In terms of tissue distribution, highly expressed in pineal gland and retina. Also detected in heart and intestine.

The protein resides in the cytoplasm. It catalyses the reaction a 2-arylethylamine + acetyl-CoA = an N-acetyl-2-arylethylamine + CoA + H(+). Its pathway is aromatic compound metabolism; melatonin biosynthesis; melatonin from serotonin: step 1/2. Functionally, controls the night/day rhythm of melatonin production in the pineal gland. Catalyzes the N-acetylation of serotonin into N-acetylserotonin, the penultimate step in the synthesis of melatonin. The sequence is that of Serotonin N-acetyltransferase (AANAT) from Mesocricetus auratus (Golden hamster).